The chain runs to 955 residues: MAM domain-containing glycosylphosphatidylinositol anchor protein 1 (955 aa).

A signal peptide spans 1-18 (MEVTCLLLLALIPFHCRG). 2 Ig-like domains span residues 24 to 123 (PAQA…KSIR) and 132 to 230 (PMLT…KAIT). N-linked (GlcNAc...) asparagine glycosylation is found at Asn-42 and Asn-90. 2 disulfide bridges follow: Cys-60–Cys-108 and Cys-157–Cys-214. Residues Asn-235, Asn-247, Asn-257, Asn-307, and Asn-331 are each glycosylated (N-linked (GlcNAc...) asparagine). The Ig-like 3 domain occupies 240 to 323 (PALKLSVNET…VGNPAKKTVN (84 aa)). A disulfide bond links Cys-262 and Cys-308. 3 consecutive Ig-like domains span residues 338 to 432 (PDVI…VEVN), 440 to 532 (PTIS…AQVQ), and 539 to 631 (PEVE…FQVS). A disulfide bridge links Cys-357 with Cys-415. Asn-432 carries N-linked (GlcNAc...) asparagine glycosylation. 2 disulfide bridges follow: Cys-463/Cys-514 and Cys-560/Cys-615. A Fibronectin type-III domain is found at 643–743 (TPNPTRSHKL…SRIIHYTEPI (101 aa)). N-linked (GlcNAc...) asparagine glycosylation is found at Asn-655 and Asn-747. One can recognise an MAM domain in the interval 751 to 918 (NTCHFEDEKI…VTLKKGECPR (168 aa)). Positions 779-788 (LTQNPKRSPN) are enriched in polar residues. Residues 779 to 798 (LTQNPKRSPNTGPPTDISGT) are disordered. A glycan (N-linked (GlcNAc...) asparagine) is linked at Asn-826. Ser-932 is lipidated: GPI-anchor amidated serine. The propeptide at 933-955 (GAPCQSSPQLWGPMAIFLLALQR) is removed in mature form.

In terms of assembly, interacts heterophilically through its MAM domain with proteins in axon-rich regions and through its Ig-like domains with proteins in differentiating muscle. Interacts (through the Ig-like domains) with NLGN2. As to expression, has been found in brain, heart, skeletal muscle and kidney. Found to be overexpressed in tumor tissues.

The protein resides in the cell membrane. Required for radial migration of cortical neurons in the superficial layer of the neocortex. Plays a role in the formation or maintenance of inhibitory synapses. May function by inhibiting the activity of NLGN2. The polypeptide is MAM domain-containing glycosylphosphatidylinositol anchor protein 1 (MDGA1) (Homo sapiens (Human)).